A 1492-amino-acid polypeptide reads, in one-letter code: Collagen alpha-1(II) chain (1492 aa).

Positions 1-26 (MFSFVDSRTLVLFAATQVILLAVVRC) are cleaved as a signal peptide. Residues 27–186 (QDEEDVLATG…PPGLGGNFAA (160 aa)) constitute a propeptide, N-terminal propeptide. A VWFC domain is found at 36-94 (GSCVQHGQRYSDKDVWKPEPCQICVCDTGNVLCDEIICEDPKDCPNAEIPFGECCPICP). Residues 98-1255 (SSTSSGQGVL…ADQASSSVPQ (1158 aa)) are disordered. Basic and acidic residues-rich tracts occupy residues 110 to 121 (QKGEPGDIKDVV) and 138 to 159 (PRGD…RDGE). Over residues 163-178 (PGNPGPVGPPGPPGPP) the composition is skewed to pro residues. The span at 197–208 (GGAQMGVMQGPM) shows a compositional bias: low complexity. The interval 206-1219 (GPMGPMGPRG…PGPPGPPGPP (1014 aa)) is triple-helical region. A compositionally biased stretch (pro residues) spans 213-222 (PRGPPGPTGA). A compositionally biased stretch (low complexity) spans 223–234 (PGPQGFQGNPGE). Residues 236-245 (GEPGAGGPMG) show a composition bias toward gly residues. The segment covering 256–270 (PGDDGEAGKPGKSGE) has biased composition (basic and acidic residues). Residues 311-320 (GAKGEGGATG) show a composition bias toward gly residues. Composition is skewed to low complexity over residues 321–333 (EAGS…PRGL), 340–355 (PGAS…DGLP), 366–376 (PAGAPGFPGAP), and 396–436 (PRGE…AGAP). The segment covering 438–447 (FPGPRGPPGP) has biased composition (pro residues). Low complexity-rich tracts occupy residues 480 to 490 (SAGPQGAPGPA) and 501 to 517 (EPGA…RGAP). Positions 539–548 (GVPGLGGPKG) are enriched in gly residues. 2 stretches are compositionally biased toward low complexity: residues 627-636 (LLGAPGLRGL) and 645-655 (AQGPNGPAGPA). Pro664 and Pro673 each carry 4-hydroxyproline. Position 675 is a 3-hydroxyproline (Pro675). 4-hydroxyproline is present on residues Pro676 and Pro679. A compositionally biased stretch (low complexity) spans 711–741 (ERGSSGPQGLQGPRGLPGTPGTDGPKGATGP). Positions 769–780 (KGDRGDTGEKGP) are enriched in basic and acidic residues. Composition is skewed to low complexity over residues 838 to 850 (AGFA…DGQA) and 894 to 910 (AQGP…AGRV). Pro912 is modified (3-hydroxyproline). Residues Pro913, Pro919, and Pro925 each carry the 4-hydroxyproline modification. A compositionally biased stretch (low complexity) spans 919–930 (PGPSGAPGSAGK). Residues 1010 to 1019 (GKQGGPGSAG) show a composition bias toward gly residues. A compositionally biased stretch (low complexity) spans 1105–1114 (SGPAGARGLP). Over residues 1120–1134 (RGDKGEAGEAGERGQ) the composition is skewed to basic and acidic residues. 2 stretches are compositionally biased toward low complexity: residues 1140 to 1159 (FTGL…QGAS) and 1176 to 1186 (PSGKDGSNGLP). Pro1149 is modified (3-hydroxyproline). Pro1186 bears the 4-hydroxyproline mark. Pro1191 is subject to 3-hydroxyproline. Pro1192 bears the 4-hydroxyproline mark. Over residues 1204–1221 (AGPPGQPGPPGPPGPPGP) the composition is skewed to pro residues. Pro1206 carries the 3-hydroxyproline modification. 4-hydroxyproline occurs at positions 1207 and 1210. A 3-hydroxyproline modification is found at Pro1212. 4-hydroxyproline occurs at positions 1213 and 1216. At Pro1218 the chain carries 3-hydroxyproline. Pro1219 is modified (4-hydroxyproline). The segment at 1220–1246 (GPGIDMSAFAGLSQPEKGPDPMRYMRA) is nonhelical region (C-terminal). The segment covering 1236 to 1245 (KGPDPMRYMR) has biased composition (basic and acidic residues). Residues 1247-1492 (DQASSSVPQR…GVDIGPVCFL (246 aa)) constitute a propeptide, C-terminal propeptide. The Fibrillar collagen NC1 domain maps to 1258-1492 (VDVEATLKSL…GVDIGPVCFL (235 aa)). Cystine bridges form between Cys1288/Cys1320, Cys1328/Cys1490, and Cys1398/Cys1443. Residues Asp1306, Asn1308, Gln1309, Cys1311, and Asp1314 each coordinate Ca(2+). Asn1393 carries an N-linked (GlcNAc...) asparagine glycan.

Belongs to the fibrillar collagen family. Homotrimers of alpha 1(II) chains. Contains mostly 4-hydroxyproline. Prolines at the third position of the tripeptide repeating unit (G-X-P) are 4-hydroxylated in some or all of the chains. In terms of processing, contains 3-hydroxyproline at a few sites. This modification occurs on the first proline residue in the sequence motif Gly-Pro-Hyp, where Hyp is 4-hydroxyproline. Post-translationally, lysine residues at the third position of the tripeptide repeating unit (G-X-Y) are 5-hydroxylated in some or all of the chains. O-glycosylated on hydroxylated lysine residues. The O-linked glycan consists of a Glc-Gal disaccharide.

It is found in the secreted. The protein localises to the extracellular space. The protein resides in the extracellular matrix. Functionally, type II collagen is specific for cartilaginous tissues. It is essential for the normal embryonic development of the skeleton, for linear growth and for the ability of cartilage to resist compressive forces. This Xenopus tropicalis (Western clawed frog) protein is Collagen alpha-1(II) chain.